The primary structure comprises 349 residues: Draxin (349 aa).

An N-terminal signal peptide occupies residues Met-1–Ala-25. Disordered regions lie at residues Pro-38 to Ala-79, Pro-118 to Arg-145, and Asp-244 to Pro-273. Residues Pro-120–Arg-131 show a composition bias toward basic and acidic residues. 2 stretches are compositionally biased toward basic residues: residues Thr-132–Arg-145 and Ala-249–Lys-258. An N-linked (GlcNAc...) asparagine glycan is attached at Asn-264.

Belongs to the draxin family. As to quaternary structure, interacts with LRP6.

It localises to the secreted. Functionally, chemorepulsive axon guidance protein required for the development of spinal cord and forebrain commissures. Acts as a chemorepulsive guidance protein for commissural axons during development. Able to inhibit or repel neurite outgrowth from dorsal spinal cord. Inhibits the stabilization of cytosolic beta-catenin (CTNNB1) via its interaction with LRP6, thereby acting as an antagonist of Wnt signaling pathway. The polypeptide is Draxin (Homo sapiens (Human)).